A 635-amino-acid polypeptide reads, in one-letter code: Chaperone protein HtpG (635 aa).

The tract at residues 1–343 is a; substrate-binding; the sequence is MTAEATVETR…SNDLSLNVSR (343 aa). Positions 344 to 560 are b; it reads EILQQDPNID…EHDMGAQMRR (217 aa). Positions 561 to 635 are c; the sequence is LLEAAGQAVP…LNKLLLELSN (75 aa).

The protein belongs to the heat shock protein 90 family. Homodimer.

The protein resides in the cytoplasm. Molecular chaperone. Has ATPase activity. In Saccharophagus degradans (strain 2-40 / ATCC 43961 / DSM 17024), this protein is Chaperone protein HtpG.